Reading from the N-terminus, the 482-residue chain is UDP-N-acetylmuramate--L-alanine ligase (482 aa).

123-129 (GTHGKTT) lines the ATP pocket.

It belongs to the MurCDEF family.

It is found in the cytoplasm. The catalysed reaction is UDP-N-acetyl-alpha-D-muramate + L-alanine + ATP = UDP-N-acetyl-alpha-D-muramoyl-L-alanine + ADP + phosphate + H(+). Its pathway is cell wall biogenesis; peptidoglycan biosynthesis. Functionally, cell wall formation. This Pseudomonas putida (strain W619) protein is UDP-N-acetylmuramate--L-alanine ligase.